The primary structure comprises 373 residues: 3-dehydroquinate synthase (373 aa).

NAD(+)-binding positions include 107-111, 131-132, Lys-144, and Lys-153; these read GVIGD and TS. Zn(2+)-binding residues include Glu-186, His-249, and His-267.

Belongs to the sugar phosphate cyclases superfamily. Dehydroquinate synthase family. The cofactor is Co(2+). Zn(2+) serves as cofactor. Requires NAD(+) as cofactor.

It is found in the cytoplasm. It carries out the reaction 7-phospho-2-dehydro-3-deoxy-D-arabino-heptonate = 3-dehydroquinate + phosphate. The protein operates within metabolic intermediate biosynthesis; chorismate biosynthesis; chorismate from D-erythrose 4-phosphate and phosphoenolpyruvate: step 2/7. In terms of biological role, catalyzes the conversion of 3-deoxy-D-arabino-heptulosonate 7-phosphate (DAHP) to dehydroquinate (DHQ). The polypeptide is 3-dehydroquinate synthase (Ruegeria sp. (strain TM1040) (Silicibacter sp.)).